Reading from the N-terminus, the 444-residue chain is Glutamate--tRNA ligase 1 (444 aa).

The 'HIGH' region motif lies at Pro10–Asn20. The 'KMSKS' region motif lies at Gly241–Arg245. An ATP-binding site is contributed by Lys244.

It belongs to the class-I aminoacyl-tRNA synthetase family. Glutamate--tRNA ligase type 1 subfamily. As to quaternary structure, monomer.

The protein localises to the cytoplasm. It catalyses the reaction tRNA(Glu) + L-glutamate + ATP = L-glutamyl-tRNA(Glu) + AMP + diphosphate. Its function is as follows. Catalyzes the attachment of glutamate to tRNA(Glu) in a two-step reaction: glutamate is first activated by ATP to form Glu-AMP and then transferred to the acceptor end of tRNA(Glu). The protein is Glutamate--tRNA ligase 1 of Rhodospirillum rubrum (strain ATCC 11170 / ATH 1.1.1 / DSM 467 / LMG 4362 / NCIMB 8255 / S1).